An 87-amino-acid polypeptide reads, in one-letter code: Small ribosomal subunit protein bS18 (87 aa).

The protein belongs to the bacterial ribosomal protein bS18 family. Part of the 30S ribosomal subunit. Forms a tight heterodimer with protein bS6.

Its function is as follows. Binds as a heterodimer with protein bS6 to the central domain of the 16S rRNA, where it helps stabilize the platform of the 30S subunit. This chain is Small ribosomal subunit protein bS18, found in Sulfurimonas denitrificans (strain ATCC 33889 / DSM 1251) (Thiomicrospira denitrificans (strain ATCC 33889 / DSM 1251)).